The primary structure comprises 113 residues: UPF0122 protein PEPE_0845 (113 aa).

The protein belongs to the UPF0122 family.

In terms of biological role, might take part in the signal recognition particle (SRP) pathway. This is inferred from the conservation of its genetic proximity to ftsY/ffh. May be a regulatory protein. The chain is UPF0122 protein PEPE_0845 from Pediococcus pentosaceus (strain ATCC 25745 / CCUG 21536 / LMG 10740 / 183-1w).